The following is a 186-amino-acid chain: Elongation factor P (186 aa).

The protein belongs to the elongation factor P family.

Its subcellular location is the cytoplasm. The protein operates within protein biosynthesis; polypeptide chain elongation. Involved in peptide bond synthesis. Stimulates efficient translation and peptide-bond synthesis on native or reconstituted 70S ribosomes in vitro. Probably functions indirectly by altering the affinity of the ribosome for aminoacyl-tRNA, thus increasing their reactivity as acceptors for peptidyl transferase. The sequence is that of Elongation factor P from Prochlorococcus marinus (strain MIT 9312).